Reading from the N-terminus, the 236-residue chain is Repetitive proline-rich cell wall protein (236 aa).

The N-terminal stretch at 1 to 22 is a signal peptide; it reads MASSNFLVLLLFALFVIPQGLA. 41 repeat units span residues 27–31, 32–36, 37–41, 42–46, 47–51, 52–56, 57–61, 62–66, 67–71, 72–76, 77–81, 82–86, 87–91, 92–96, 97–101, 102–106, 107–111, 112–116, 117–121, 122–126, 127–131, 132–136, 137–141, 142–146, 147–151, 152–156, 157–161, 162–166, 167–171, 172–176, 177–181, 182–186, 187–191, 192–196, 197–201, 202–206, 207–211, 212–216, 217–221, 222–226, and 227–231. Residues 27 to 236 are 42 X 5 AA approximate tandem repeats of P-P-V-[EYV]-[KQG]; sequence PPVYQPPVYK…PPVYGPPHHP (210 aa). The disordered stretch occupies residues 143–177; sequence PVEKPPVYKPPVEKPPVYKPPVYKPPVYKPPVVKP. The disordered stretch occupies residues 204-236; it reads VYKPPVEKPPVYKPPVYKPPVEKPPVYGPPHHP. One copy of the 42; approximate repeat lies at 232 to 236; it reads PPHHP.

This sequence belongs to the plant proline-rich protein superfamily. ENOD12 family.

It is found in the secreted. It localises to the cell wall. In terms of biological role, this is a developmentally regulated putative cell wall protein. The polypeptide is Repetitive proline-rich cell wall protein (PRP) (Medicago sativa (Alfalfa)).